Consider the following 259-residue polypeptide: Phosphatidylglycerol--prolipoprotein diacylglyceryl transferase (259 aa).

4 helical membrane passes run 9-29 (IIFS…VVGI), 55-75 (FITY…VLLY), 92-112 (EGGM…YLFC), and 117-137 (INFL…LFLG). R138 lines the a 1,2-diacyl-sn-glycero-3-phospho-(1'-sn-glycerol) pocket. 3 helical membrane passes run 172–192 (QLYE…YAVF), 201–221 (GLNS…IEMF), and 228–248 (IGFI…MLLL).

The protein belongs to the Lgt family.

The protein resides in the cell inner membrane. It catalyses the reaction L-cysteinyl-[prolipoprotein] + a 1,2-diacyl-sn-glycero-3-phospho-(1'-sn-glycerol) = an S-1,2-diacyl-sn-glyceryl-L-cysteinyl-[prolipoprotein] + sn-glycerol 1-phosphate + H(+). The protein operates within protein modification; lipoprotein biosynthesis (diacylglyceryl transfer). Its function is as follows. Catalyzes the transfer of the diacylglyceryl group from phosphatidylglycerol to the sulfhydryl group of the N-terminal cysteine of a prolipoprotein, the first step in the formation of mature lipoproteins. This Rickettsia typhi (strain ATCC VR-144 / Wilmington) protein is Phosphatidylglycerol--prolipoprotein diacylglyceryl transferase.